A 291-amino-acid chain; its full sequence is MPTLKDIRVRIKGVKSTQQVTKAMKMVAAAKLRRAQERAIMARPYARKLKEMLGSLSDKVDTSLNPLLSNRSEVNKVVVILITADRGLCGAFNTNIVKLAYKLIHEDYAAQHSKNGVSLICAGSRGFDFFRKRGYNIIKGYPGVFQRLDFSFAKEIAETVSGMYLRGEADRVVVVYNEFKSVLAPVLKFETLLPITPEASGKDGGSDYIYEPSPESIIDVLVPKHLNTQVWRVMLESNAAEQAARMSAMDSATENAKELLRTLNISYNRARQAAITKELSEIVGGADALKG.

Belongs to the ATPase gamma chain family. In terms of assembly, F-type ATPases have 2 components, CF(1) - the catalytic core - and CF(0) - the membrane proton channel. CF(1) has five subunits: alpha(3), beta(3), gamma(1), delta(1), epsilon(1). CF(0) has three main subunits: a, b and c.

It localises to the cell inner membrane. Its function is as follows. Produces ATP from ADP in the presence of a proton gradient across the membrane. The gamma chain is believed to be important in regulating ATPase activity and the flow of protons through the CF(0) complex. The polypeptide is ATP synthase gamma chain (Chlorobium phaeobacteroides (strain DSM 266 / SMG 266 / 2430)).